The primary structure comprises 199 residues: 3-isopropylmalate dehydratase small subunit (199 aa).

The protein belongs to the LeuD family. LeuD type 1 subfamily. As to quaternary structure, heterodimer of LeuC and LeuD.

It catalyses the reaction (2R,3S)-3-isopropylmalate = (2S)-2-isopropylmalate. The protein operates within amino-acid biosynthesis; L-leucine biosynthesis; L-leucine from 3-methyl-2-oxobutanoate: step 2/4. In terms of biological role, catalyzes the isomerization between 2-isopropylmalate and 3-isopropylmalate, via the formation of 2-isopropylmaleate. The sequence is that of 3-isopropylmalate dehydratase small subunit from Kocuria rhizophila (strain ATCC 9341 / DSM 348 / NBRC 103217 / DC2201).